Reading from the N-terminus, the 547-residue chain is Putative nitric oxide synthase (547 aa).

Residues 24–40 (QLAPNPSSFSPTRAAST) show a composition bias toward low complexity. Disordered regions lie at residues 24–57 (QLAPNPSSFSPTRAASTAPPPPEGAGPAAPSRGD) and 72–91 (VLAPEDAERRRRRREKRKAL). The span at 81-91 (RRRRREKRKAL) shows a compositional bias: basic residues. In terms of domain architecture, CP-type G spans 167-343 (ADQLRDKLSY…LYDTPGVHLH (177 aa)).

It belongs to the TRAFAC class YlqF/YawG GTPase family. NOA1 subfamily.

It carries out the reaction 2 L-arginine + 3 NADPH + 4 O2 + H(+) = 2 L-citrulline + 2 nitric oxide + 3 NADP(+) + 4 H2O. Produces nitric oxide (NO) which is a messenger molecule involved in hormonal signaling and defense responses in plant. This chain is Putative nitric oxide synthase, found in Oryza sativa subsp. japonica (Rice).